The primary structure comprises 135 residues: Ribonuclease P protein component (135 aa).

Residues 115–135 (ETEPVSPVSPTSLPQNERGSP) are disordered. Positions 122 to 135 (VSPTSLPQNERGSP) are enriched in polar residues.

This sequence belongs to the RnpA family. As to quaternary structure, consists of a catalytic RNA component (M1 or rnpB) and a protein subunit.

It carries out the reaction Endonucleolytic cleavage of RNA, removing 5'-extranucleotides from tRNA precursor.. RNaseP catalyzes the removal of the 5'-leader sequence from pre-tRNA to produce the mature 5'-terminus. It can also cleave other RNA substrates such as 4.5S RNA. The protein component plays an auxiliary but essential role in vivo by binding to the 5'-leader sequence and broadening the substrate specificity of the ribozyme. This Chloroflexus aggregans (strain MD-66 / DSM 9485) protein is Ribonuclease P protein component.